We begin with the raw amino-acid sequence, 134 residues long: Small ribosomal subunit protein uS11 (134 aa).

The segment at 114–134 is disordered; the sequence is TPVPHNGTRPPRKWFKRQEKR. A compositionally biased stretch (basic residues) spans 123-134; sequence PPRKWFKRQEKR.

This sequence belongs to the universal ribosomal protein uS11 family. In terms of assembly, part of the 30S ribosomal subunit. Interacts with proteins S7 and S18. Binds to IF-3.

Its function is as follows. Located on the platform of the 30S subunit, it bridges several disparate RNA helices of the 16S rRNA. Forms part of the Shine-Dalgarno cleft in the 70S ribosome. The chain is Small ribosomal subunit protein uS11 from Mesomycoplasma hyopneumoniae (strain J / ATCC 25934 / NCTC 10110) (Mycoplasma hyopneumoniae).